The chain runs to 199 residues: Recombination protein RecR (199 aa).

Residues 56–71 form a C4-type zinc finger; that stretch reads CRSCFNVAQSELCRIC. One can recognise a Toprim domain in the interval 79 to 174; the sequence is ALICVVEEPK…RVTRLASGLP (96 aa).

Belongs to the RecR family.

Its function is as follows. May play a role in DNA repair. It seems to be involved in an RecBC-independent recombinational process of DNA repair. It may act with RecF and RecO. The polypeptide is Recombination protein RecR (Frankia alni (strain DSM 45986 / CECT 9034 / ACN14a)).